Consider the following 407-residue polypeptide: Substance-P receptor (407 aa).

The Extracellular portion of the chain corresponds to 1 to 31; it reads MDNVLQVDSDLFPNISTNTSEPNQFVQPAWQ. Residues N14 and N18 are each glycosylated (N-linked (GlcNAc...) asparagine). The chain crosses the membrane as a helical span at residues 32–54; that stretch reads IVLWAAAYTVIVVTSVVGNVVVM. The Cytoplasmic portion of the chain corresponds to 55–64; the sequence is WIILAHKRMR. The chain crosses the membrane as a helical span at residues 65–86; that stretch reads TVTNYFLVNLAFAEASMAAFNT. Over 87–106 the chain is Extracellular; that stretch reads VVNFTYAVHNEWYYGLFYCK. C105 and C180 are joined by a disulfide. The helical transmembrane segment at 107-128 threads the bilayer; the sequence is FHNFFPIAAVFASIYSMTAVAF. Residues 129 to 148 lie on the Cytoplasmic side of the membrane; sequence DRYMAIIHPLQPRLSATATK. A helical membrane pass occupies residues 149–169; that stretch reads VVICVIWVLALLLAFPQGYYS. Topologically, residues 170–194 are extracellular; the sequence is TTETMPNRVVCMIEWPEHPNKIYEK. A helical membrane pass occupies residues 195–219; it reads VYHICVTVLIYFLPLLVIGYAYTVV. Residues 220–248 are Cytoplasmic-facing; sequence GITLWASEIPGDSSDRYHEQVSAKRKVVK. A helical membrane pass occupies residues 249 to 270; it reads MMIVVVCTFAICWLPFHIFFLL. The Extracellular portion of the chain corresponds to 271 to 283; that stretch reads PYINPDLYLEKFI. The helical transmembrane segment at 284-308 threads the bilayer; that stretch reads QQVYLAIMWLAMSSTMYNPIIYCCL. The Cytoplasmic segment spans residues 309–407; sequence NDRFRLGFKH…SFSFYSNMLS (99 aa). Residue C322 is the site of S-palmitoyl cysteine attachment. The segment at 365-394 is disordered; the sequence is HEEELEDGPKTTPSSLDLTSNGSSRSDSKT. The segment covering 375–394 has biased composition (polar residues); the sequence is TTPSSLDLTSNGSSRSDSKT.

Belongs to the G-protein coupled receptor 1 family. Interacts with ARRB1.

It is found in the cell membrane. In terms of biological role, this is a receptor for the tachykinin neuropeptide substance P. It is probably associated with G proteins that activate a phosphatidylinositol-calcium second messenger system. This chain is Substance-P receptor (TACR1), found in Canis lupus familiaris (Dog).